Reading from the N-terminus, the 212-residue chain is 3-demethoxyubiquinol 3-hydroxylase (212 aa).

Fe cation-binding residues include glutamate 61, glutamate 91, histidine 94, glutamate 143, glutamate 175, and histidine 178.

Belongs to the COQ7 family. Fe cation is required as a cofactor.

The protein localises to the cell membrane. The enzyme catalyses a 5-methoxy-2-methyl-3-(all-trans-polyprenyl)benzene-1,4-diol + AH2 + O2 = a 3-demethylubiquinol + A + H2O. It participates in cofactor biosynthesis; ubiquinone biosynthesis. In terms of biological role, catalyzes the hydroxylation of 2-nonaprenyl-3-methyl-6-methoxy-1,4-benzoquinol during ubiquinone biosynthesis. The chain is 3-demethoxyubiquinol 3-hydroxylase from Methylibium petroleiphilum (strain ATCC BAA-1232 / LMG 22953 / PM1).